The primary structure comprises 61 residues: RQRHPDCDKPPDTKRCTGHNPAFYYNPRRKNCERFSYGGCGGNGNHFKTKQLCHCHCHEND.

The BPTI/Kunitz inhibitor domain maps to 7–57; sequence CDKPPDTKRCTGHNPAFYYNPRRKNCERFSYGGCGGNGNHFKTKQLCHCHC. Intrachain disulfides connect Cys7/Cys57, Cys16/Cys40, and Cys32/Cys53.

This sequence belongs to the venom Kunitz-type family. As to quaternary structure, heterodimer; disulfide-linked. The A chains have phospholipase A2 activity and the B chains show homology with the basic protease inhibitors. In terms of tissue distribution, expressed by the venom gland.

The protein localises to the secreted. In terms of biological role, beta-bungarotoxins are presynaptic neurotoxins of the venom. The B chain is homologous to venom basic protease inhibitors but has no protease inhibitor activity and blocks voltage-gated potassium channels (Kv). The polypeptide is Kunitz-type serine protease inhibitor homolog beta-bungarotoxin B5-B chain (Bungarus multicinctus (Many-banded krait)).